A 600-amino-acid chain; its full sequence is Putative DNA 3'-5' helicase Rad25 (600 aa).

The 150-residue stretch at 253 to 402 (VDRFEDASAG…DIYTLVGRPI (150 aa)) folds into the Helicase ATP-binding domain. 266–273 (GPPGSGKT) is an ATP binding site. The DEAH box signature appears at 356–359 (DEVH). In terms of domain architecture, Helicase C-terminal spans 457–600 (EIEHLVDQHG…VTESDASHSP (144 aa)). A disordered region spans residues 569–600 (RGTEEEDHARSRMRHLSTKGVRVTESDASHSP). Basic and acidic residues predominate over residues 590–600 (RVTESDASHSP).

The protein belongs to the helicase family. RAD25/XPB subfamily.

The catalysed reaction is Couples ATP hydrolysis with the unwinding of duplex DNA by translocating in the 3'-5' direction.. It catalyses the reaction ATP + H2O = ADP + phosphate + H(+). This chain is Putative DNA 3'-5' helicase Rad25, found in Halobacterium salinarum (strain ATCC 700922 / JCM 11081 / NRC-1) (Halobacterium halobium).